An 856-amino-acid polypeptide reads, in one-letter code: Envelope glycoprotein gp150 (856 aa).

Over 1-785 (MAEGFAANRQ…WIGNIPQYLK (785 aa)) the chain is Extracellular. Residues Asn-220, Asn-258, Asn-269, Asn-274, Asn-298, Asn-330, Asn-336, Asn-342, Asn-418, Asn-422, Asn-448, Asn-481, Asn-499, Asn-518, Asn-531, Asn-548, and Asn-551 are each glycosylated (N-linked (GlcNAc...) asparagine; by host). Positions 616-636 (VMLALATVLSIAGAGTGATAI) are fusion peptide. The stretch at 643–693 (HQVLATHQEAIEKVTGALKINNLRLVTLEHQVLVIGLKVEAMEKFLYTAFA) forms a coiled coil. The segment at 662 to 680 (INNLRLVTLEHQVLVIGLK) is immunosuppression. Asn-717, Asn-721, Asn-729, and Asn-737 each carry an N-linked (GlcNAc...) asparagine; by host glycan. Positions 736–772 (YNQTKDLQQKFYEIIMDIEQNNVQGKTGIQQLQKWED) form a coiled coil. Residues 786-806 (GLLGGILGIGLGVLLLILCLP) traverse the membrane as a helical segment. The Cytoplasmic segment spans residues 807-856 (TLVDCIRNCIHKILGYTVIAMPEVEGEEIQPQMELRRNGRQCGMSEKEEE).

In terms of assembly, the mature envelope protein (Env) consists of a trimer of SU-TM heterodimers attached by noncovalent interactions or by a labile interchain disulfide bond. Specific enzymatic cleavages in vivo yield mature proteins. Envelope glycoproteins are synthesized as an inactive precursor that is N-glycosylated and processed likely by host cell furin or by a furin-like protease in the Golgi to yield the mature SU and TM proteins. The cleavage site between SU and TM requires the minimal sequence [KR]-X-[KR]-R.

Its subcellular location is the virion membrane. The protein localises to the host cell membrane. Functionally, the surface protein (SU) attaches the virus to the host cell by binding to its receptor. This interaction triggers the refolding of the transmembrane protein (TM) and is thought to activate its fusogenic potential by unmasking its fusion peptide. Fusion occurs at the host cell plasma membrane. The transmembrane protein (TM) acts as a class I viral fusion protein. Under the current model, the protein has at least 3 conformational states: pre-fusion native state, pre-hairpin intermediate state, and post-fusion hairpin state. During viral and target cell membrane fusion, the coiled coil regions (heptad repeats) assume a trimer-of-hairpins structure, positioning the fusion peptide in close proximity to the C-terminal region of the ectodomain. The formation of this structure appears to drive apposition and subsequent fusion of viral and target cell membranes. Membranes fusion leads to delivery of the nucleocapsid into the cytoplasm. In Felidae (cat family), this protein is Envelope glycoprotein gp150 (env).